Here is a 584-residue protein sequence, read N- to C-terminus: MTQVSKTIAKPSGNANLYSRLFSYYRVYKKLIFIALAGLCLFSFVDAGMIYFVKPLIDQGLSKADSHTLQLGALLVVAIFFLRGIASFTSSYAIAYISSKVTYRIRQQAFDKLLYLPRTYFDLNSRGSLISKIIYDTEQLSQSFSSAVVIAIRESVIILVLFSMMVYNSWQLTAIFLVIVPIIALIINKVSKRFKNISHKLQNSMGQVSNKTEQAILNQQEIVLLDTRTQISAQFEKTNNNNRQQNMKLQATSAISNPVIQLIASFAIAAVLLLASIDQVLNQLTPGSFTLILIAMGSLLKPLKQLSNINQQLQKGLIAAKSLFSFLDQQEEHDIGTKQLSKTCSNIRFNNFSFTYQGKTQPALSNFSLQIKGGTSVAFVGESGSGKSTLARLLLRLYQSPKQSILINDIAIEDYSLSSLRAQFAFVSQDIVLIDDTLANNISFGCNRDVTDSEIEQAAINANVMAFAKELPLGLNSEIGENGRNLSGGQRQRIAIARAMLRDASIIVLDEATSALDNHSEKHIQQALTRLTQHKTVLIIAHKLSSIQHVDEIIVINKGRLIEQGNHKTLQAKAGYYQSLYQSQ.

6 consecutive transmembrane segments (helical) span residues 32 to 52 (IFIA…MIYF), 68 to 88 (TLQL…IASF), 146 to 166 (SAVV…SMMV), 167 to 187 (YNSW…ALII), 254 to 274 (AISN…VLLL), and 280 to 300 (VLNQ…GSLL). Residues 33-315 (FIALAGLCLF…LSNINQQLQK (283 aa)) enclose the ABC transmembrane type-1 domain. The ABC transporter domain maps to 347 to 583 (IRFNNFSFTY…AGYYQSLYQS (237 aa)). An ATP-binding site is contributed by 381-388 (GESGSGKS).

It belongs to the ABC transporter superfamily. Lipid exporter (TC 3.A.1.106) family. Homodimer.

The protein resides in the cell inner membrane. The enzyme catalyses ATP + H2O + lipid A-core oligosaccharideSide 1 = ADP + phosphate + lipid A-core oligosaccharideSide 2.. Its function is as follows. Involved in lipopolysaccharide (LPS) biosynthesis. Translocates lipid A-core from the inner to the outer leaflet of the inner membrane. Transmembrane domains (TMD) form a pore in the inner membrane and the ATP-binding domain (NBD) is responsible for energy generation. In Colwellia psychrerythraea (strain 34H / ATCC BAA-681) (Vibrio psychroerythus), this protein is ATP-dependent lipid A-core flippase 2.